Consider the following 181-residue polypeptide: Crossover junction endodeoxyribonuclease RuvC (181 aa).

Residues Asp7, Glu67, and Asp139 contribute to the active site. Asp7, Glu67, and Asp139 together coordinate Mg(2+).

This sequence belongs to the RuvC family. In terms of assembly, homodimer which binds Holliday junction (HJ) DNA. The HJ becomes 2-fold symmetrical on binding to RuvC with unstacked arms; it has a different conformation from HJ DNA in complex with RuvA. In the full resolvosome a probable DNA-RuvA(4)-RuvB(12)-RuvC(2) complex forms which resolves the HJ. Mg(2+) serves as cofactor.

The protein localises to the cytoplasm. It carries out the reaction Endonucleolytic cleavage at a junction such as a reciprocal single-stranded crossover between two homologous DNA duplexes (Holliday junction).. Its function is as follows. The RuvA-RuvB-RuvC complex processes Holliday junction (HJ) DNA during genetic recombination and DNA repair. Endonuclease that resolves HJ intermediates. Cleaves cruciform DNA by making single-stranded nicks across the HJ at symmetrical positions within the homologous arms, yielding a 5'-phosphate and a 3'-hydroxyl group; requires a central core of homology in the junction. The consensus cleavage sequence is 5'-(A/T)TT(C/G)-3'. Cleavage occurs on the 3'-side of the TT dinucleotide at the point of strand exchange. HJ branch migration catalyzed by RuvA-RuvB allows RuvC to scan DNA until it finds its consensus sequence, where it cleaves and resolves the cruciform DNA. In Bordetella avium (strain 197N), this protein is Crossover junction endodeoxyribonuclease RuvC.